The chain runs to 162 residues: AP-1 complex subunit sigma-1 (162 aa).

It belongs to the adaptor complexes small subunit family. In terms of assembly, adaptor protein complex 1 (AP-1) is a heterotetramer composed of two large adaptins (gamma-type subunit apl4 and beta-type subunit apl2), a medium adaptin (mu-type subunit apm1) and a small adaptin (sigma-type subunit aps1). AP-1 interacts with clathrin.

It is found in the cytoplasm. The protein resides in the nucleus. It localises to the cytoplasmic vesicle. Its subcellular location is the clathrin-coated vesicle membrane. The protein localises to the endosome. It is found in the golgi apparatus. In terms of biological role, component of the AP-1 complex which links clathrin to receptors in coated vesicles. Clathrin-associated protein complexes are believed to interact with the cytoplasmic tails of membrane proteins, leading to their selection and concentration. This chain is AP-1 complex subunit sigma-1 (vas2), found in Schizosaccharomyces pombe (strain 972 / ATCC 24843) (Fission yeast).